The chain runs to 412 residues: Short-chain specific acyl-CoA dehydrogenase, mitochondrial (412 aa).

The N-terminal 24 residues, 1-24 (MAATLLARACGLVRGAPWPWGWRR), are a transit peptide targeting the mitochondrion. Position 27 is a phosphothreonine (Thr27). Lys51 carries the N6-acetyllysine; alternate modification. Lys51 is modified (N6-succinyllysine; alternate). Position 72 is an N6-acetyllysine (Lys72). An N6-acetyllysine; alternate modification is found at Lys129. Lys129 is subject to N6-succinyllysine; alternate. FAD-binding positions include 152–161 (FALSEPGNGS) and 185–187 (WIT). Residue Ser161 participates in substrate binding. At Lys208 the chain carries N6-acetyllysine. Lys262 is subject to N6-acetyllysine; alternate. Position 262 is an N6-succinyllysine; alternate (Lys262). Residue 269–272 (DTGR) participates in substrate binding. Arg297 is a binding site for FAD. At Lys306 the chain carries N6-acetyllysine; alternate. Lys306 carries the post-translational modification N6-succinyllysine; alternate. FAD-binding positions include Gln308 and 365–369 (QILGG). Catalysis depends on Glu392, which acts as the Proton acceptor. Gly393 lines the substrate pocket. 394–396 (TSE) contacts FAD.

Belongs to the acyl-CoA dehydrogenase family. As to quaternary structure, homotetramer. It depends on FAD as a cofactor.

Its subcellular location is the mitochondrion matrix. The catalysed reaction is a short-chain 2,3-saturated fatty acyl-CoA + oxidized [electron-transfer flavoprotein] + H(+) = a short-chain (2E)-enoyl-CoA + reduced [electron-transfer flavoprotein]. It carries out the reaction butanoyl-CoA + oxidized [electron-transfer flavoprotein] + H(+) = (2E)-butenoyl-CoA + reduced [electron-transfer flavoprotein]. It catalyses the reaction pentanoyl-CoA + oxidized [electron-transfer flavoprotein] + H(+) = (2E)-pentenoyl-CoA + reduced [electron-transfer flavoprotein]. The enzyme catalyses hexanoyl-CoA + oxidized [electron-transfer flavoprotein] + H(+) = (2E)-hexenoyl-CoA + reduced [electron-transfer flavoprotein]. The protein operates within lipid metabolism; mitochondrial fatty acid beta-oxidation. Its function is as follows. Short-chain specific acyl-CoA dehydrogenase is one of the acyl-CoA dehydrogenases that catalyze the first step of mitochondrial fatty acid beta-oxidation, an aerobic process breaking down fatty acids into acetyl-CoA and allowing the production of energy from fats. The first step of fatty acid beta-oxidation consists in the removal of one hydrogen from C-2 and C-3 of the straight-chain fatty acyl-CoA thioester, resulting in the formation of trans-2-enoyl-CoA. Among the different mitochondrial acyl-CoA dehydrogenases, short-chain specific acyl-CoA dehydrogenase acts specifically on acyl-CoAs with saturated 4 to 6 carbons long primary chains. The protein is Short-chain specific acyl-CoA dehydrogenase, mitochondrial (ACADS) of Bos taurus (Bovine).